Here is a 251-residue protein sequence, read N- to C-terminus: Large ribosomal subunit protein uL3 (251 aa).

Residue Gln151 is modified to N5-methylglutamine. The segment at 221–251 (GLKQAANSNDSAAADTPAEVAAVEATEGQEG) is disordered. Positions 225–251 (AANSNDSAAADTPAEVAAVEATEGQEG) are enriched in low complexity.

This sequence belongs to the universal ribosomal protein uL3 family. As to quaternary structure, part of the 50S ribosomal subunit. Forms a cluster with proteins L14 and L19. Post-translationally, methylated by PrmB.

In terms of biological role, one of the primary rRNA binding proteins, it binds directly near the 3'-end of the 23S rRNA, where it nucleates assembly of the 50S subunit. The protein is Large ribosomal subunit protein uL3 of Novosphingobium aromaticivorans (strain ATCC 700278 / DSM 12444 / CCUG 56034 / CIP 105152 / NBRC 16084 / F199).